The following is a 201-amino-acid chain: ATP-dependent Clp protease proteolytic subunit (201 aa).

The Nucleophile role is filled by serine 98. The active site involves histidine 123.

This sequence belongs to the peptidase S14 family. In terms of assembly, fourteen ClpP subunits assemble into 2 heptameric rings which stack back to back to give a disk-like structure with a central cavity, resembling the structure of eukaryotic proteasomes.

It is found in the cytoplasm. It catalyses the reaction Hydrolysis of proteins to small peptides in the presence of ATP and magnesium. alpha-casein is the usual test substrate. In the absence of ATP, only oligopeptides shorter than five residues are hydrolyzed (such as succinyl-Leu-Tyr-|-NHMec, and Leu-Tyr-Leu-|-Tyr-Trp, in which cleavage of the -Tyr-|-Leu- and -Tyr-|-Trp bonds also occurs).. Functionally, cleaves peptides in various proteins in a process that requires ATP hydrolysis. Has a chymotrypsin-like activity. Plays a major role in the degradation of misfolded proteins. In Rickettsia felis (strain ATCC VR-1525 / URRWXCal2) (Rickettsia azadi), this protein is ATP-dependent Clp protease proteolytic subunit.